The chain runs to 239 residues: uncharacterized protein (239 aa).

It is found in the endoplasmic reticulum. The protein resides in the golgi apparatus. This is an uncharacterized protein from Schizosaccharomyces pombe (strain 972 / ATCC 24843) (Fission yeast).